A 276-amino-acid chain; its full sequence is Rhomboid protease GlpG (276 aa).

Transmembrane regions (helical) follow at residues 94–114, 142–162, 169–189, 192–212, 229–249, and 250–270; these read GPVT…MQIL, ALMH…WYLG, LGSG…GYVQ, FSGP…GYVW, LIIF…GMSM, and ANGA…VDSL. Residue S201 is the Nucleophile of the active site. Residue H254 is part of the active site.

The protein belongs to the peptidase S54 family.

It is found in the cell inner membrane. It catalyses the reaction Cleaves type-1 transmembrane domains using a catalytic dyad composed of serine and histidine that are contributed by different transmembrane domains.. Functionally, rhomboid-type serine protease that catalyzes intramembrane proteolysis. This Escherichia coli O81 (strain ED1a) protein is Rhomboid protease GlpG.